The sequence spans 791 residues: Phenylalanine--tRNA ligase beta subunit (791 aa).

Positions 39–148 (AADFSGVVVA…ADAPVGADIR (110 aa)) constitute a tRNA-binding domain. A B5 domain is found at 401-476 (PLRAPVRLRE…RVYGYDAIPR (76 aa)). Mg(2+) is bound by residues aspartate 454, aspartate 460, glutamate 463, and glutamate 464. Residues 697 to 790 (SRFPLVRRDL…LAADFGAKLR (94 aa)) enclose the FDX-ACB domain.

The protein belongs to the phenylalanyl-tRNA synthetase beta subunit family. Type 1 subfamily. As to quaternary structure, tetramer of two alpha and two beta subunits. Mg(2+) serves as cofactor.

The protein resides in the cytoplasm. The enzyme catalyses tRNA(Phe) + L-phenylalanine + ATP = L-phenylalanyl-tRNA(Phe) + AMP + diphosphate + H(+). This is Phenylalanine--tRNA ligase beta subunit from Methylococcus capsulatus (strain ATCC 33009 / NCIMB 11132 / Bath).